The following is a 448-amino-acid chain: Asparagine--tRNA ligase (448 aa).

The protein belongs to the class-II aminoacyl-tRNA synthetase family. As to quaternary structure, homodimer.

The protein resides in the cytoplasm. It carries out the reaction tRNA(Asn) + L-asparagine + ATP = L-asparaginyl-tRNA(Asn) + AMP + diphosphate + H(+). In Streptococcus thermophilus (strain ATCC BAA-250 / LMG 18311), this protein is Asparagine--tRNA ligase.